We begin with the raw amino-acid sequence, 432 residues long: Pachytene checkpoint protein 2 homolog (432 aa).

179–186 (GPPGTGKT) is an ATP binding site.

It belongs to the AAA ATPase family. PCH2 subfamily.

Functionally, plays a key role in chromosome recombination and chromosome structure development during meiosis. Required at early steps in meiotic recombination that leads to non-crossovers pathways. Also needed for efficient completion of homologous synapsis by influencing crossover distribution along the chromosomes affecting both crossovers and non-crossovers pathways. The chain is Pachytene checkpoint protein 2 homolog (TRIP13) from Gallus gallus (Chicken).